A 283-amino-acid chain; its full sequence is IGQALALLLKNQLPSGSELSLYDIAPVTPGVAVDLSHIPTAVKIKGFSGEDVTPALEGADVVLISAGVARKPGMDRSDLFNVNAGIVKNLVQQIAKTCPKACVGIITNPVNTTVAIAAEVLKKAGVYDKNKLFGVTTLDIIRSNTFVAELKGKLPTEVEVPVIGGHSGVTILPLLSQIPGVSFTEQEAAELTKRIQNAGTEVVEAKAGGGSATLSMGQAAARFGLSLVRALQGEKDVVECAYVEGDGQYARFFSQPLLLGKNGVEERKSIGTLSAFEQHSLDA.

NAD(+)-binding positions include 1-2 and aspartate 23; that span reads IG. Positions 70 and 76 each coordinate substrate. NAD(+) is bound by residues asparagine 83 and 106 to 108; that span reads ITN. 2 residues coordinate substrate: asparagine 108 and arginine 142. The Proton acceptor role is filled by histidine 166. Methionine 216 is an NAD(+) binding site.

Belongs to the LDH/MDH superfamily. MDH type 1 family. Homodimer.

It carries out the reaction (S)-malate + NAD(+) = oxaloacetate + NADH + H(+). Its function is as follows. Catalyzes the reversible oxidation of malate to oxaloacetate. The protein is Malate dehydrogenase (mdh) of Salmonella muenchen.